Here is a 268-residue protein sequence, read N- to C-terminus: Holocytochrome c-type synthase (268 aa).

Low complexity predominate over residues 1 to 22; it reads MGLSPSAPAVAVQASNASASPP. Positions 1-25 are disordered; it reads MGLSPSAPAVAVQASNASASPPSGC. A lipid anchor (N-myristoyl glycine) is attached at Gly-2. 2 HRM repeats span residues 24–29 and 34–39; these read GCPMHE and GCPVNT.

Belongs to the cytochrome c-type heme lyase family.

It is found in the mitochondrion inner membrane. The protein resides in the membrane. The catalysed reaction is holo-[cytochrome c] = apo-[cytochrome c] + heme b. In terms of biological role, lyase that catalyzes the covalent linking of the heme group to the cytochrome C apoprotein to produce the mature functional cytochrome. The chain is Holocytochrome c-type synthase from Homo sapiens (Human).